The primary structure comprises 138 residues: Large ribosomal subunit protein uL16c (138 aa).

Belongs to the universal ribosomal protein uL16 family. Part of the 50S ribosomal subunit.

It localises to the plastid. Its subcellular location is the chloroplast. This Phaeodactylum tricornutum (strain CCAP 1055/1) protein is Large ribosomal subunit protein uL16c.